Reading from the N-terminus, the 165-residue chain is DNA mimic protein DMP19 (165 aa).

Belongs to the DMP19-like protein family. As to quaternary structure, monomer. Homodimer. The monomeric form of DMP19 interacts with the DNA-binding protein HU homodimer with 1:1 stoichiometry. The dimeric form of DMP19 interacts with the Neisseria hypothetical transcription factor (NHTF) dimer.

With respect to regulation, activity can be modulated in vitro by crown ethers, which are small cyclic polyethers that can modify protein surface behavior dramatically by stabilizing either intra- or intermolecular interactions, thereby probably altering the protein's tertiary and quaternary structure. Its function is as follows. Acts as a DNA mimic. Interacts with DNA-binding proteins and prevents their binding to DNA by occupying the DNA binding sites on the proteins, acting as a competitive inhibitor. DMP19 is a bifunctional DNA mimic protein involved in controlling nucleoid formation as well as gene regulation. This bifunctionality depends on different oligomeric states. The monomeric form interacts with the DNA-binding protein HU, which prevents HU from binding to DNA and forming nucleoids. The dimeric form interacts with the Neisseria hypothetical transcription factor (NHTF) and prevents NHTF from binding to its DNA-binding sites, thereby blocking its repressor activity and influencing expression of the target genes. DMP19 might use these different oligomerizations to regulate genes in two steps: the monomeric form may first release selected gene regions in chromosomal DNA by preventing HU from binding to DNA and forming nucleoids, then the dimeric form blocks the gene repressor activity of NHTF and ensures the continued expression of NHTF-controlled genes. The chain is DNA mimic protein DMP19 from Neisseria meningitidis serogroup B (strain ATCC BAA-335 / MC58).